Consider the following 127-residue polypeptide: RutC family protein PYRAB12510 (127 aa).

The protein belongs to the RutC family.

The chain is RutC family protein PYRAB12510 from Pyrococcus abyssi (strain GE5 / Orsay).